The chain runs to 338 residues: Ornithine carbamoyltransferase, catabolic (338 aa).

Carbamoyl phosphate contacts are provided by residues 58-61 (STRT), Gln-85, Arg-109, and 136-139 (HPTQ). L-ornithine is bound by residues Asn-168, Asp-232, and 236–237 (SM). Residues 273 to 274 (CL) and Arg-318 contribute to the carbamoyl phosphate site.

This sequence belongs to the aspartate/ornithine carbamoyltransferase superfamily. OTCase family.

It is found in the cytoplasm. It catalyses the reaction carbamoyl phosphate + L-ornithine = L-citrulline + phosphate + H(+). The protein operates within amino-acid degradation; L-arginine degradation via ADI pathway; carbamoyl phosphate from L-arginine: step 2/2. In terms of biological role, reversibly catalyzes the transfer of the carbamoyl group from carbamoyl phosphate (CP) to the N(epsilon) atom of ornithine (ORN) to produce L-citrulline. This Streptococcus gordonii (strain Challis / ATCC 35105 / BCRC 15272 / CH1 / DL1 / V288) protein is Ornithine carbamoyltransferase, catabolic.